A 620-amino-acid chain; its full sequence is MAASCNLDVIGEDGGCALTGGWQPGAFERPYMGFDARLLSTNSSLCSELIFSAHLMQISPTPQPREQVDVCEDPDNDPPEPSCAQFVDAVADSLALDKLCLICRTIDLYRRQFGLSPQWIADYAMLCTKTLAAPPCAVATVVAAFEFVYLMDKHYLRRGKTTLVGAFARRVLTLVDIQRHFFLHVCFRTDGGVPRCAASGTAPAATAMAGLGMADKVQYSNYSFLVQSSTRAMLLTVADVPSGDDGALQAVPHGRHGAGRPADGGGGVFGPKQQSTVAALMSWKECAKMIDCSGSERRRPGATMTCCERARADDDEYERQLLSTENTYLGSADNQAEGGNDTHLKWGYADLTLLLLSQSSTWEASEKTSLASQSRRACVEEYWASHRTVLARDTAPRFARFVDADAVPDTATGPVLATTLKHVRSRGRTCAECVLCNLILTREHWLALRRFKRDVISYSSNNANLFDCISPVLSALSDANSEPLAGDCGVGGGGTCPEDSGRFLELMHAAGTEAIYKHLFCDPMCALVELQTNPSVLFSPIGPPPEPDEIELQKARLASENWFSGRVCAGLWALAFTFKTYQIFTPKPTACAAFIKDAGLLLRRHNLPLISLEHTLCNYV.

Residues Cys100, Cys103, His180, Cys186, Cys306, Cys307, Cys433, Cys436, His518, Cys525, Cys568, and His605 each contribute to the Zn(2+) site. 3 zinc finger regions span residues 100 to 186 (CLIC…LHVC), 306 to 605 (CCER…LRRH), and 433 to 525 (CVLC…DPMC).

The protein belongs to the herpesviridae UL32 protein family.

The protein localises to the host cytoplasm. It localises to the host nucleus. Functionally, plays a role in efficient localization of neo-synthesized capsids to nuclear replication compartments, thereby controlling cleavage and packaging of virus genomic DNA. This Equus caballus (Horse) protein is Packaging protein UL32 homolog.